The chain runs to 272 residues: Protein STAY-GREEN 1, chloroplastic (272 aa).

A chloroplast-targeting transit peptide spans 1–50 (MGTLTTSLVVPSKLNNEQQSSIFIHKTRRKCKKNQSIVPVARLFGPAIFE). The disordered stretch occupies residues 201-222 (TSPSSSSGGVGGVKSTSFTSNS).

The protein belongs to the staygreen family. In terms of assembly, interacts with PSY1.

It localises to the plastid. It is found in the chloroplast. Its function is as follows. Required to trigger chlorophyll degradation during leaf senescence and fruit ripening. Binds directly PSY1 to regulate the accumulation of lycopene and beta-carotene in the maturing fruits. This Solanum lycopersicum (Tomato) protein is Protein STAY-GREEN 1, chloroplastic.